A 146-amino-acid polypeptide reads, in one-letter code: Putative trafficking protein particle complex subunit TRS31 (146 aa).

The protein belongs to the TRAPP small subunits family. BET3 subfamily. In terms of assembly, part of the multisubunit TRAPP (transport protein particle) complex.

Its subcellular location is the golgi apparatus. The protein resides in the cis-Golgi network. It is found in the endoplasmic reticulum. Its function is as follows. May play a role in vesicular transport from endoplasmic reticulum to Golgi. This chain is Putative trafficking protein particle complex subunit TRS31 (TRS31), found in Encephalitozoon cuniculi (strain GB-M1) (Microsporidian parasite).